We begin with the raw amino-acid sequence, 378 residues long: Dihydroorotate dehydrogenase (quinone) (378 aa).

Residues 77-81 and Thr101 contribute to the FMN site; that span reads AGFDK. A substrate-binding site is contributed by Lys81. 126-130 contacts substrate; sequence NRMGF. FMN contacts are provided by Asn158 and Asn191. Substrate is bound at residue Asn191. The active-site Nucleophile is Ser194. A substrate-binding site is contributed by Asn196. Residues Lys229 and Thr257 each coordinate FMN. 258–259 lines the substrate pocket; it reads NT. FMN is bound by residues Gly287, Gly316, and 337-338; that span reads YT.

The protein belongs to the dihydroorotate dehydrogenase family. Type 2 subfamily. Monomer. Requires FMN as cofactor.

It localises to the cell membrane. The enzyme catalyses (S)-dihydroorotate + a quinone = orotate + a quinol. Its pathway is pyrimidine metabolism; UMP biosynthesis via de novo pathway; orotate from (S)-dihydroorotate (quinone route): step 1/1. Catalyzes the conversion of dihydroorotate to orotate with quinone as electron acceptor. This Synechococcus elongatus (strain ATCC 33912 / PCC 7942 / FACHB-805) (Anacystis nidulans R2) protein is Dihydroorotate dehydrogenase (quinone).